The following is a 423-amino-acid chain: tRNA(Ile)-lysidine synthase (423 aa).

29-34 provides a ligand contact to ATP; it reads SGGKDS.

It belongs to the tRNA(Ile)-lysidine synthase family.

It localises to the cytoplasm. It carries out the reaction cytidine(34) in tRNA(Ile2) + L-lysine + ATP = lysidine(34) in tRNA(Ile2) + AMP + diphosphate + H(+). Functionally, ligates lysine onto the cytidine present at position 34 of the AUA codon-specific tRNA(Ile) that contains the anticodon CAU, in an ATP-dependent manner. Cytidine is converted to lysidine, thus changing the amino acid specificity of the tRNA from methionine to isoleucine. This Lactococcus lactis subsp. lactis (strain IL1403) (Streptococcus lactis) protein is tRNA(Ile)-lysidine synthase.